An 828-amino-acid polypeptide reads, in one-letter code: Mediator of RNA polymerase II transcription subunit 16 (828 aa).

WD repeat units follow at residues 68 to 107 (GHQEVITSLEWDQSGSRLLSADADGRIKCWGMTDHLANSW), 199 to 241 (RCRV…VSEK), 264 to 308 (DKFP…LPLN), 622 to 663 (NQGS…CLPV), and 777 to 816 (FPTEPCKSCTRCGCVTMLKSPNKATAVKQWEQRWIKTCLC).

It belongs to the Mediator complex subunit 16 family. In terms of assembly, component of the Mediator complex.

The protein localises to the nucleus. Its function is as follows. Component of the Mediator complex, a coactivator involved in the regulated transcription of nearly all RNA polymerase II-dependent genes. Mediator functions as a bridge to convey information from gene-specific regulatory proteins to the basal RNA polymerase II transcription machinery. Mediator is recruited to promoters by direct interactions with regulatory proteins and serves as a scaffold for the assembly of a functional preinitiation complex with RNA polymerase II and the general transcription factors. In Xenopus tropicalis (Western clawed frog), this protein is Mediator of RNA polymerase II transcription subunit 16 (med16).